A 207-amino-acid polypeptide reads, in one-letter code: Ribosomal RNA large subunit methyltransferase E (207 aa).

Glycine 60, tryptophan 62, aspartate 80, aspartate 96, and aspartate 121 together coordinate S-adenosyl-L-methionine. Lysine 161 functions as the Proton acceptor in the catalytic mechanism.

The protein belongs to the class I-like SAM-binding methyltransferase superfamily. RNA methyltransferase RlmE family.

The protein localises to the cytoplasm. It catalyses the reaction uridine(2552) in 23S rRNA + S-adenosyl-L-methionine = 2'-O-methyluridine(2552) in 23S rRNA + S-adenosyl-L-homocysteine + H(+). Specifically methylates the uridine in position 2552 of 23S rRNA at the 2'-O position of the ribose in the fully assembled 50S ribosomal subunit. The polypeptide is Ribosomal RNA large subunit methyltransferase E (Pseudomonas paraeruginosa (strain DSM 24068 / PA7) (Pseudomonas aeruginosa (strain PA7))).